Consider the following 165-residue polypeptide: Phosphopantetheine adenylyltransferase (165 aa).

Threonine 9 contacts substrate. ATP contacts are provided by residues 9 to 10 and histidine 17; that span reads TF. Substrate contacts are provided by lysine 41, leucine 78, and arginine 92. ATP-binding positions include 93-95, glutamate 103, and 128-134; these read GLR and HQAIASK.

Belongs to the bacterial CoaD family. As to quaternary structure, homohexamer. Requires Mg(2+) as cofactor.

It localises to the cytoplasm. The catalysed reaction is (R)-4'-phosphopantetheine + ATP + H(+) = 3'-dephospho-CoA + diphosphate. The protein operates within cofactor biosynthesis; coenzyme A biosynthesis; CoA from (R)-pantothenate: step 4/5. Functionally, reversibly transfers an adenylyl group from ATP to 4'-phosphopantetheine, yielding dephospho-CoA (dPCoA) and pyrophosphate. The sequence is that of Phosphopantetheine adenylyltransferase from Ruegeria sp. (strain TM1040) (Silicibacter sp.).